A 170-amino-acid chain; its full sequence is Putative apoptosis inhibitor ORF87 (170 aa).

BIR repeat units lie at residues 22-92 (RIKS…PVGK) and 104-169 (RLKS…KLSS).

Functionally, may act as an apoptosis inhibitor. This is Putative apoptosis inhibitor ORF87 from Ostreid herpesvirus 1 (isolate France) (OsHV-1).